A 291-amino-acid polypeptide reads, in one-letter code: Pantothenate synthetase (291 aa).

33–40 (MGALHEGH) provides a ligand contact to ATP. H40 acts as the Proton donor in catalysis. Q64 lines the (R)-pantoate pocket. Beta-alanine is bound at residue Q64. 157–160 (GEKD) contributes to the ATP binding site. Residue Q163 coordinates (R)-pantoate. ATP contacts are provided by residues V186 and 194–197 (LSSR).

This sequence belongs to the pantothenate synthetase family. Homodimer.

The protein resides in the cytoplasm. The catalysed reaction is (R)-pantoate + beta-alanine + ATP = (R)-pantothenate + AMP + diphosphate + H(+). It functions in the pathway cofactor biosynthesis; (R)-pantothenate biosynthesis; (R)-pantothenate from (R)-pantoate and beta-alanine: step 1/1. Catalyzes the condensation of pantoate with beta-alanine in an ATP-dependent reaction via a pantoyl-adenylate intermediate. In Rubrobacter xylanophilus (strain DSM 9941 / JCM 11954 / NBRC 16129 / PRD-1), this protein is Pantothenate synthetase.